A 613-amino-acid polypeptide reads, in one-letter code: Zinc metalloproteinase-disintegrin-like MTP8 (613 aa).

The first 20 residues, 1–20, serve as a signal peptide directing secretion; sequence MIEVLLVTICFTVFPYQGSP. Positions 21 to 191 are excised as a propeptide; the sequence is IILESGNVND…DETIEKISQL (171 aa). The 197-residue stretch at 205–401 folds into the Peptidase M12B domain; that stretch reads KYIELYVVVD…VRPQCILNKP (197 aa). Residue Glu-208 participates in Ca(2+) binding. Asn-282 is a glycosylation site (N-linked (GlcNAc...) asparagine). Asp-292 is a Ca(2+) binding site. Intrachain disulfides connect Cys-316–Cys-396, Cys-356–Cys-380, and Cys-358–Cys-363. Residues His-341, His-345, and His-351 each contribute to the Zn(2+) site. Residues Cys-396, Asn-399, Asn-414, Phe-416, Glu-418, Glu-421, and Asp-424 each coordinate Ca(2+). Residues 409-495 form the Disintegrin domain; sequence PPVCGNYFVE…KCPTDSFQRN (87 aa). Cystine bridges form between Cys-412–Cys-441, Cys-423–Cys-436, Cys-425–Cys-431, Cys-435–Cys-458, Cys-449–Cys-455, Cys-454–Cys-480, Cys-467–Cys-487, Cys-474–Cys-506, Cys-499–Cys-511, Cys-518–Cys-568, Cys-533–Cys-575, Cys-543–Cys-577, Cys-546–Cys-556, Cys-563–Cys-601, and Cys-595–Cys-606. An N-linked (GlcNAc...) asparagine glycan is attached at Asn-437. The short motif at 473-475 is the D/ECD-tripeptide element; that stretch reads DCD. 4 residues coordinate Ca(2+): Asp-475, Leu-476, Glu-478, and Asp-490. 2 N-linked (GlcNAc...) asparagine glycosylation sites follow: Asn-550 and Asn-572.

This sequence belongs to the venom metalloproteinase (M12B) family. P-III subfamily. In terms of assembly, monomer. Zn(2+) serves as cofactor. As to expression, expressed by the venom gland.

The protein resides in the secreted. In terms of biological role, snake venom zinc metalloproteinase that may impair hemostasis in the prey. This Drysdalia coronoides (White-lipped snake) protein is Zinc metalloproteinase-disintegrin-like MTP8.